We begin with the raw amino-acid sequence, 159 residues long: Transcriptional repressor NrdR (159 aa).

Residues 1 to 11 are compositionally biased toward polar residues; that stretch reads MQCPTCQNTDS. A disordered region spans residues 1–21; that stretch reads MQCPTCQNTDSRVLESRSADS. A zinc finger spans residues 3–34; sequence CPTCQNTDSRVLESRSADSGKSVRRRRECLNC. The 91-residue stretch at 49–139 folds into the ATP-cone domain; that stretch reads VSVLKKDGSR…VYRKFNGVKD (91 aa).

The protein belongs to the NrdR family. The cofactor is Zn(2+).

Functionally, negatively regulates transcription of bacterial ribonucleotide reductase nrd genes and operons by binding to NrdR-boxes. The sequence is that of Transcriptional repressor NrdR from Prochlorococcus marinus (strain MIT 9301).